Here is a 200-residue protein sequence, read N- to C-terminus: Sperm acrosome developmental regulator (200 aa).

Ser63 carries the phosphoserine modification. Over residues 167-183 (QERRRRRRMRSHASHTS) the composition is skewed to basic residues. Positions 167–200 (QERRRRRRMRSHASHTSRHSESVQGLKHDARSPL) are disordered. The segment covering 184-200 (RHSESVQGLKHDARSPL) has biased composition (basic and acidic residues).

The protein resides in the cytoplasmic vesicle. It is found in the secretory vesicle. The protein localises to the acrosome. Functionally, may play an important role in acrosome formation and nucleus shaping during spermiogenesis. The chain is Sperm acrosome developmental regulator (Spacdr) from Rattus norvegicus (Rat).